Consider the following 622-residue polypeptide: Probable potassium transport system protein Kup (622 aa).

12 consecutive transmembrane segments (helical) span residues 8-28 (LAAL…TSVL), 50-70 (VLSV…VVLV), 100-120 (GWLL…GVIT), 137-157 (PHFG…LFAV), 169-189 (FGPV…PHIV), 203-223 (ALGF…AVVL), 247-267 (WFSV…ALLL), 285-305 (ALVP…QALI), 337-357 (IYLP…VVMF), 366-386 (AYGI…FFVI), 392-412 (YPLA…LAFF), and 419-439 (LLQG…LMMT).

The protein belongs to the HAK/KUP transporter (TC 2.A.72) family.

It localises to the cell inner membrane. The enzyme catalyses K(+)(in) + H(+)(in) = K(+)(out) + H(+)(out). In terms of biological role, transport of potassium into the cell. Likely operates as a K(+):H(+) symporter. The protein is Probable potassium transport system protein Kup of Acidovorax ebreus (strain TPSY) (Diaphorobacter sp. (strain TPSY)).